The primary structure comprises 136 residues: MARTKQTARKSTGGKAPRKQLATKAARKSAPSAGGVKKPHRYRPGTVALREIRRYQKSTELLIRKLPFQRLVREIAQDFKTDLRFQSSAVMALQESAEAYLVSLFEDTNLAAIHAKRVTIQPKDIALARRLRGERT.

Positions 1–42 (MARTKQTARKSTGGKAPRKQLATKAARKSAPSAGGVKKPHRY) are disordered. The residue at position 5 (Lys-5) is an N6,N6,N6-trimethyllysine; alternate. N6,N6-dimethyllysine; alternate is present on Lys-5. 2 positions are modified to N6-methyllysine; alternate: Lys-5 and Lys-10. The residue at position 10 (Lys-10) is an N6-acetyllysine; alternate. A Phosphoserine modification is found at Ser-11. At Lys-15 the chain carries N6,N6-dimethyllysine; alternate. N6-acetyllysine; alternate is present on residues Lys-15, Lys-19, Lys-24, Lys-28, and Lys-37. Lys-19, Lys-24, Lys-28, and Lys-37 each carry N6-methyllysine; alternate. 2 positions are modified to N6,N6,N6-trimethyllysine; alternate: Lys-28 and Lys-37. An N6,N6-dimethyllysine; alternate mark is found at Lys-28 and Lys-37. N6-acetyllysine occurs at positions 57 and 65. Lys-80 carries the post-translational modification N6,N6,N6-trimethyllysine; alternate. N6,N6-dimethyllysine; alternate is present on Lys-80. Lys-80 is modified (N6-methyllysine; alternate).

This sequence belongs to the histone H3 family. The nucleosome is a histone octamer containing two molecules each of H2A, H2B, H3 and H4 assembled in one H3-H4 heterotetramer and two H2A-H2B heterodimers. The octamer wraps approximately 147 bp of DNA. In terms of processing, phosphorylated to form H3S10ph. H3S10ph promotes subsequent H3K14ac formation and is required for transcriptional activation through TBP recruitment to the promoters. Post-translationally, mono-, di- and trimethylated by the COMPASS complex to form H3K4me1/2/3. H3K4me activates gene expression by regulating transcription elongation and plays a role in telomere length maintenance. H3K4me enrichment correlates with transcription levels, and occurs in a 5' to 3' gradient with H3K4me3 enrichment at the 5'-end of genes, shifting to H3K4me2 and then H3K4me1. Methylated by SET2 to form H3K36me. H3K36me represses gene expression. Methylated by DOT1 to form H3K79me. H3K79me is required for association of SIR proteins with telomeric regions and for telomeric silencing. The COMPASS-mediated formation of H3K4me2/3 and the DOT1-mediated formation of H3K79me require H2BK123ub1. Acetylation of histone H3 leads to transcriptional activation. H3K14ac formation by GCN5 is promoted by H3S10ph. H3K14ac can also be formed by ESA1. H3K56ac formation occurs predominantly in newly synthesized H3 molecules during G1, S and G2/M of the cell cycle and may be involved in DNA repair.

It is found in the nucleus. Its subcellular location is the chromosome. Functionally, core component of nucleosome. Nucleosomes wrap and compact DNA into chromatin, limiting DNA accessibility to the cellular machineries which require DNA as a template. Histones thereby play a central role in transcription regulation, DNA repair, DNA replication and chromosomal stability. DNA accessibility is regulated via a complex set of post-translational modifications of histones, also called histone code, and nucleosome remodeling. The chain is Histone H3.2 (HHT2) from Mycosarcoma maydis (Corn smut fungus).